Reading from the N-terminus, the 142-residue chain is MVLSSQNKKAIEELGNLIKANAEAWGADALARLFELHPQTKTYFSKFSGFEACNEQVKKHGKRVMNALADATHHLDNLHLHLEDLARKHGENLLVDPHNFHLFADCIVVTLAVNLQAFTPVTHCAVDKFLELVAYELSSCYR.

Positions 2-142 constitute a Globin domain; the sequence is VLSSQNKKAI…VAYELSSCYR (141 aa). H60 is a binding site for O2. H89 contributes to the heme b binding site.

This sequence belongs to the globin family. In terms of assembly, heterotetramer of two alpha chains and two beta chains. As to expression, red blood cells.

Its function is as follows. Involved in oxygen transport from gills to the various peripheral tissues. This Hemitrygon akajei (Red stingray) protein is Hemoglobin subunit alpha (hba).